Here is a 253-residue protein sequence, read N- to C-terminus: Small ribosomal subunit protein uS2 (253 aa).

Positions 226-253 (QGADNADVEKELSESVEENSAEEVDDAE) are disordered. Positions 239–253 (ESVEENSAEEVDDAE) are enriched in acidic residues.

It belongs to the universal ribosomal protein uS2 family.

The protein is Small ribosomal subunit protein uS2 of Lactobacillus delbrueckii subsp. bulgaricus (strain ATCC 11842 / DSM 20081 / BCRC 10696 / JCM 1002 / NBRC 13953 / NCIMB 11778 / NCTC 12712 / WDCM 00102 / Lb 14).